The primary structure comprises 29 residues: Cyclotide mobo-A (29 aa).

Residues 1 to 29 (GFPTCGETCTLGTCNTPGCTCSWPICTRN) constitute a cross-link (cyclopeptide (Gly-Asn)). Disulfide bonds link Cys5-Cys19, Cys9-Cys21, and Cys14-Cys26.

The protein belongs to the cyclotide family. Moebius subfamily. This is a cyclic peptide.

In terms of biological role, probably participates in a plant defense mechanism. The chain is Cyclotide mobo-A from Melicytus obovatus (Hymenanthera obovata).